We begin with the raw amino-acid sequence, 99 residues long: Protein Frey (99 aa).

The chain crosses the membrane as a helical span at residues 13–29; the sequence is AGLSLFALYLVLAAALL. Residues 64–90 form a disordered region; the sequence is RPKHPWPRGPRPLLSRAQQRKRDGPDM.

Interacts with SPPL2C (via active sites); the interaction stabilizes FREY1 protein and inhibits SPPL2C proteolytic activity. Interacts with IZUMO1; the interaction retains IZUMO1 at the endoplasmic reticulum membrane and coordinates IZUMO1 complex assembly.

It localises to the endoplasmic reticulum membrane. In terms of biological role, key regulator for male fertility expressed transiently in round spermatids where it recruits IZUMO1 at the endoplasmic reticulum (ER) membrane and coordinates the oolemmal binding multimeric complex (IZUMO1 complex) assembly. Upon complete assembly of the IZUMO1 complex, its ER retention is released, facilitating IZUMO1 complex export to the acrosome. Through the interaction with SPPL2C, inhibits its intramembrane protease activity directly accessing the catalytic center of an I-CLiP. In Bos taurus (Bovine), this protein is Protein Frey (FREY1).